We begin with the raw amino-acid sequence, 420 residues long: tRNA(Ile)-lysidine synthase, chloroplastic (420 aa).

63–68 (SGGQDS) provides a ligand contact to ATP.

Belongs to the tRNA(Ile)-lysidine synthase family.

The protein localises to the plastid. Its subcellular location is the chloroplast. The catalysed reaction is cytidine(34) in tRNA(Ile2) + L-lysine + ATP = lysidine(34) in tRNA(Ile2) + AMP + diphosphate + H(+). In terms of biological role, ligates lysine onto the cytidine present at position 34 of the AUA codon-specific tRNA(Ile) that contains the anticodon CAU, in an ATP-dependent manner. Cytidine is converted to lysidine, thus changing the amino acid specificity of the tRNA from methionine to isoleucine. This Zygnema circumcarinatum (Green alga) protein is tRNA(Ile)-lysidine synthase, chloroplastic.